Here is a 121-residue protein sequence, read N- to C-terminus: Small ribosomal subunit protein uS13 (121 aa).

The interval arginine 93–lysine 121 is disordered.

The protein belongs to the universal ribosomal protein uS13 family. Part of the 30S ribosomal subunit. Forms a loose heterodimer with protein S19. Forms two bridges to the 50S subunit in the 70S ribosome.

Its function is as follows. Located at the top of the head of the 30S subunit, it contacts several helices of the 16S rRNA. In the 70S ribosome it contacts the 23S rRNA (bridge B1a) and protein L5 of the 50S subunit (bridge B1b), connecting the 2 subunits; these bridges are implicated in subunit movement. Contacts the tRNAs in the A and P-sites. The polypeptide is Small ribosomal subunit protein uS13 (Paracidovorax citrulli (strain AAC00-1) (Acidovorax citrulli)).